Here is a 270-residue protein sequence, read N- to C-terminus: MKFLEKLKQAGNRNKSLLCVGLDPDPKLMPVGMSALEFNREIIEATAPFVCGYKINLAFYEALGKQGWEILSETCEFIPRELITIADAKRGDIGNTSKAYARAILDELDCDGVTVSPYLGYDSLEPFIEYQDKGIFILCLTSNQGSTDFQMLKTEYLGQKRFLYEVVADKASLWNRYENIGLVVGATQQEELKKLRLIYPKLPFLIPGIGAQGGDLKATIENGTNPNGELAIICASRGILYARSGSEFAQGAAEAAEQMRDAINHYRKRF.

Lys-89 serves as the catalytic Proton donor.

It belongs to the OMP decarboxylase family. Type 2 subfamily.

The enzyme catalyses orotidine 5'-phosphate + H(+) = UMP + CO2. It participates in pyrimidine metabolism; UMP biosynthesis via de novo pathway; UMP from orotate: step 2/2. This chain is Orotidine 5'-phosphate decarboxylase, found in Dehalococcoides mccartyi (strain ATCC BAA-2100 / JCM 16839 / KCTC 5957 / BAV1).